The chain runs to 335 residues: Serpentine receptor class alpha-13 (335 aa).

Over 1–25 (MAIISSVNRTCASESLLELYRSYKY) the chain is Extracellular. Residues 26-46 (ILSTSFNIIIPIISLFFLVYA) form a helical membrane-spanning segment. The Cytoplasmic portion of the chain corresponds to 47-61 (IKQLCAQSIIQYSTR). Residues 62-82 (VLLITTILFAVCHQIAYFCFK) traverse the membrane as a helical segment. The Extracellular portion of the chain corresponds to 83-108 (ADLLYTMLFKLDQPCNLQHSSYDCRF). The helical transmembrane segment at 109–129 (ITIATTTSNCGMALVQLAMSI) threads the bilayer. At 130–146 (DRVFALKFNRVYYKLKS) the chain is on the cytoplasmic side. A helical membrane pass occupies residues 147-167 (IPGITLALITLSISFSMFFIL). Over 168–192 (TIDDPLSGYVNHCGFYPTYSQDKFH) the chain is Extracellular. A helical membrane pass occupies residues 193-213 (IFLDVTLYLAVFNFVFDIGLM). Topologically, residues 214-243 (YYSYQEILWKRSYSFVNRFQSRISLKCTQA) are cytoplasmic. A helical transmembrane segment spans residues 244-264 (IFIISICQCISNVLYSGLLSL). Residues 265–278 (LMKLGRYMSSADYN) lie on the Extracellular side of the membrane. A helical membrane pass occupies residues 279–299 (LSLSLAYTTPYSCLILPILIC). The Cytoplasmic segment spans residues 300 to 335 (KVLEYIKKQRTVGILSLRNQKQSMEGHMAMINSAWK).

It belongs to the nematode receptor-like protein sra family. In terms of tissue distribution, expressed in the AWA and AWC chemosensory neurons.

The protein localises to the membrane. Its function is as follows. Chemosensory receptor that negatively regulates RAS/MAPK signaling during vulva induction and the negative regulation of olfaction of volitile attractants. Required for the suppression of vulval induction in response to food starvation. Signaling acts through the GPA-5 G-alpha protein subunit. This Caenorhabditis elegans protein is Serpentine receptor class alpha-13 (sra-13).